The chain runs to 421 residues: Enolase (421 aa).

Q165 provides a ligand contact to (2R)-2-phosphoglycerate. The Proton donor role is filled by E207. D244, E285, and D312 together coordinate Mg(2+). Residues K337, R366, S367, and K388 each contribute to the (2R)-2-phosphoglycerate site. The Proton acceptor role is filled by K337.

It belongs to the enolase family. Mg(2+) serves as cofactor.

The protein localises to the cytoplasm. The protein resides in the secreted. Its subcellular location is the cell surface. It carries out the reaction (2R)-2-phosphoglycerate = phosphoenolpyruvate + H2O. Its pathway is carbohydrate degradation; glycolysis; pyruvate from D-glyceraldehyde 3-phosphate: step 4/5. Functionally, catalyzes the reversible conversion of 2-phosphoglycerate (2-PG) into phosphoenolpyruvate (PEP). It is essential for the degradation of carbohydrates via glycolysis. This Ehrlichia ruminantium (strain Welgevonden) protein is Enolase.